Reading from the N-terminus, the 682-residue chain is Penicillin-binding protein activator LpoA (682 aa).

An N-terminal signal peptide occupies residues 1–26 (MLSSITVRTKSGRLIPLVLAATLLAA). The N-palmitoyl cysteine moiety is linked to residue Cys27. Cys27 is lipidated: S-diacylglycerol cysteine.

It belongs to the LpoA family. As to quaternary structure, interacts with PBP1a.

The protein resides in the cell outer membrane. Its function is as follows. Regulator of peptidoglycan synthesis that is essential for the function of penicillin-binding protein 1A (PBP1a). This Edwardsiella ictaluri (strain 93-146) protein is Penicillin-binding protein activator LpoA.